Here is a 215-residue protein sequence, read N- to C-terminus: Porin MspB (215 aa).

An N-terminal signal peptide occupies residues 1-31; the sequence is MTAFKRVLIAMISALLAGTTGMFVSAGAAHA.

It belongs to the mycobacterial porin (TC 1.B.24) family. Octamers. Probably forms a goblet with the wide end on the exterior of the outer membrane and a central channel. It is not known if mixed oligomers of MspB with other Msp subunits form in vivo.

The protein localises to the cell outer membrane. The protein resides in the secreted. Its subcellular location is the cell wall. In terms of biological role, a backup porin induced when MspA, the major porin, is deleted. Probably forms a water-filled channel which favors the permeation of cations. There are about 2400 porins in wild-type, 800 in an mspA deletion and 150 in a double mspA-mspC deletion. A triple mspA-mspC-mspD deletion mutant has low but detectable channel activity. Different conductance values with maxima at 2.3 and 4.6 nanosiemens might be caused by a simultaneous reconstitution of MspB channels into the membrane or by the existence of different MspB conformations. The chain is Porin MspB (mspB) from Mycolicibacterium smegmatis (strain ATCC 700084 / mc(2)155) (Mycobacterium smegmatis).